A 188-amino-acid polypeptide reads, in one-letter code: Elongation factor P-like protein (188 aa).

The protein belongs to the elongation factor P family.

This chain is Elongation factor P-like protein, found in Saccharophagus degradans (strain 2-40 / ATCC 43961 / DSM 17024).